The chain runs to 304 residues: Nod factor export ATP-binding protein I (304 aa).

The ABC transporter domain occupies 6–236 (IEFDKVKKSY…EIGCDVIEIF (231 aa)). 38–45 (GPNGAGKT) lines the ATP pocket.

This sequence belongs to the ABC transporter superfamily. Lipooligosaccharide exporter (TC 3.A.1.102) family. As to quaternary structure, the complex is composed of two ATP-binding proteins (NodI) and two transmembrane proteins (NodJ).

The protein resides in the cell inner membrane. In terms of biological role, part of the ABC transporter complex NodIJ involved in the export of the nodulation factors (Nod factors), the bacterial signal molecules that induce symbiosis and subsequent nodulation induction. Nod factors are LCO (lipo-chitin oligosaccharide), a modified beta-1,4-linked N-acetylglucosamine oligosaccharide. This subunit is responsible for energy coupling to the transport system. The chain is Nod factor export ATP-binding protein I from Paraburkholderia xenovorans (strain LB400).